The chain runs to 362 residues: Cobalt-precorrin-5B C(1)-methyltransferase (362 aa).

Belongs to the CbiD family.

It catalyses the reaction Co-precorrin-5B + S-adenosyl-L-methionine = Co-precorrin-6A + S-adenosyl-L-homocysteine. Its pathway is cofactor biosynthesis; adenosylcobalamin biosynthesis; cob(II)yrinate a,c-diamide from sirohydrochlorin (anaerobic route): step 6/10. In terms of biological role, catalyzes the methylation of C-1 in cobalt-precorrin-5B to form cobalt-precorrin-6A. The protein is Cobalt-precorrin-5B C(1)-methyltransferase of Burkholderia multivorans (strain ATCC 17616 / 249).